A 467-amino-acid chain; its full sequence is ATP synthase subunit beta (467 aa).

156–163 (GGAGVGKT) lines the ATP pocket.

This sequence belongs to the ATPase alpha/beta chains family. In terms of assembly, F-type ATPases have 2 components, CF(1) - the catalytic core - and CF(0) - the membrane proton channel. CF(1) has five subunits: alpha(3), beta(3), gamma(1), delta(1), epsilon(1). CF(0) has three main subunits: a(1), b(2) and c(9-12). The alpha and beta chains form an alternating ring which encloses part of the gamma chain. CF(1) is attached to CF(0) by a central stalk formed by the gamma and epsilon chains, while a peripheral stalk is formed by the delta and b chains.

The protein resides in the cell inner membrane. The catalysed reaction is ATP + H2O + 4 H(+)(in) = ADP + phosphate + 5 H(+)(out). In terms of biological role, produces ATP from ADP in the presence of a proton gradient across the membrane. The catalytic sites are hosted primarily by the beta subunits. In Cupriavidus pinatubonensis (strain JMP 134 / LMG 1197) (Cupriavidus necator (strain JMP 134)), this protein is ATP synthase subunit beta.